The chain runs to 101 residues: Small ribosomal subunit protein uS14 (101 aa).

The protein belongs to the universal ribosomal protein uS14 family. Part of the 30S ribosomal subunit. Contacts proteins S3 and S10.

Its function is as follows. Binds 16S rRNA, required for the assembly of 30S particles and may also be responsible for determining the conformation of the 16S rRNA at the A site. This chain is Small ribosomal subunit protein uS14, found in Dechloromonas aromatica (strain RCB).